The following is a 146-amino-acid chain: Leghemoglobin 1 (146 aa).

The 145-residue stretch at 2-146 (GFTAQQDALV…LAAAIKKAMS (145 aa)) folds into the Globin domain. A phosphoserine; by CCAMK mark is found at serine 13 and serine 14. Nitrated tyrosine is present on tyrosine 30. 2 positions are modified to phosphoserine; by CCAMK: serine 45 and serine 55. Serine 45 serves as a coordination point for heme b. Position 61 (histidine 61) interacts with O2. Residues lysine 64, histidine 93, and lysine 96 each coordinate heme b. Position 123 is a phosphoserine; by CCAMK (serine 123). Tyrosine 134 carries the nitrated tyrosine modification.

This sequence belongs to the plant globin family. Monomer. Nitrated in effective nodules and particularly in hypoxic conditions; this mechanism may play a protective role in the symbiosis by buffering toxic peroxynitrite NO(2)(-). Nitration level decrease during nodule senescence. Post-translationally, phosphorylated by CCAMK at serine residues in a Ca(2+)-dependent manner; the phosphorylation at Ser-45 disrupts the molecular environment of its porphyrin ring oxygen binding pocket, thus leading to a reduced oxygen consumption and to the delivery of oxygen O(2) to symbiosomes. In terms of tissue distribution, specifically and strongly expressed in root nodules and at low levels in seedlings.

Its subcellular location is the cytoplasm. The protein localises to the cytosol. The protein resides in the nucleus. Its function is as follows. Leghemoglobin that reversibly binds oxygen O(2) through a pentacoordinated heme iron. In root nodules, facilitates the diffusion of oxygen to the bacteroids while preventing the bacterial nitrogenase from being inactivated by buffering dioxygen, nitric oxide and carbon monoxide, and promoting the formation of reactive oxygen species (ROS, e.g. H(2)O(2)). This role is essential for symbiotic nitrogen fixation (SNF). In Lotus japonicus (Lotus corniculatus var. japonicus), this protein is Leghemoglobin 1.